The sequence spans 111 residues: Small ribosomal subunit protein uS10 (111 aa).

It belongs to the universal ribosomal protein uS10 family. In terms of assembly, part of the 30S ribosomal subunit.

In terms of biological role, involved in the binding of tRNA to the ribosomes. In Protochlamydia amoebophila (strain UWE25), this protein is Small ribosomal subunit protein uS10.